A 78-amino-acid polypeptide reads, in one-letter code: Small ribosomal subunit protein uS17 (78 aa).

Belongs to the universal ribosomal protein uS17 family. Part of the 30S ribosomal subunit.

One of the primary rRNA binding proteins, it binds specifically to the 5'-end of 16S ribosomal RNA. The polypeptide is Small ribosomal subunit protein uS17 (Sinorhizobium medicae (strain WSM419) (Ensifer medicae)).